The sequence spans 219 residues: Putative germin-like protein 8-1 (219 aa).

Positions 1-23 (MASFISFLLLAALIGMASWQAIA) are cleaved as a signal peptide. The cysteines at positions 33 and 48 are disulfide-linked. N-linked (GlcNAc...) asparagine glycosylation is found at asparagine 53 and asparagine 79. Residues 63-215 (AMLDKPRDTA…AFQVDKKIID (153 aa)) enclose the Cupin type-1 domain. Mn(2+)-binding residues include histidine 112, histidine 114, glutamate 119, and histidine 160.

The protein belongs to the germin family. In terms of assembly, oligomer (believed to be a pentamer but probably hexamer).

Its subcellular location is the secreted. The protein resides in the extracellular space. It localises to the apoplast. Its function is as follows. Plays a role in broad-spectrum disease resistance. Probably has no oxalate oxidase activity even if the active site is conserved. The polypeptide is Putative germin-like protein 8-1 (Oryza sativa subsp. japonica (Rice)).